Consider the following 178-residue polypeptide: ATP synthase subunit delta (178 aa).

The protein belongs to the ATPase delta chain family. In terms of assembly, F-type ATPases have 2 components, F(1) - the catalytic core - and F(0) - the membrane proton channel. F(1) has five subunits: alpha(3), beta(3), gamma(1), delta(1), epsilon(1). F(0) has three main subunits: a(1), b(2) and c(10-14). The alpha and beta chains form an alternating ring which encloses part of the gamma chain. F(1) is attached to F(0) by a central stalk formed by the gamma and epsilon chains, while a peripheral stalk is formed by the delta and b chains.

The protein resides in the cell inner membrane. F(1)F(0) ATP synthase produces ATP from ADP in the presence of a proton or sodium gradient. F-type ATPases consist of two structural domains, F(1) containing the extramembraneous catalytic core and F(0) containing the membrane proton channel, linked together by a central stalk and a peripheral stalk. During catalysis, ATP synthesis in the catalytic domain of F(1) is coupled via a rotary mechanism of the central stalk subunits to proton translocation. Its function is as follows. This protein is part of the stalk that links CF(0) to CF(1). It either transmits conformational changes from CF(0) to CF(1) or is implicated in proton conduction. This chain is ATP synthase subunit delta, found in Pseudomonas fluorescens (strain Pf0-1).